Reading from the N-terminus, the 273-residue chain is Manganese catalase (273 aa).

A Mn(2+)-binding site is contributed by Glu-35. Positions 57 and 61 each coordinate Ca(2+). Mn(2+)-binding residues include Glu-66, His-69, Glu-149, and His-182. Residues Asn-220, Ser-222, and Gly-224 each contribute to the Ca(2+) site. Residues Glu-254 to Glu-273 are disordered.

It belongs to the manganese catalase family. It depends on Ca(2+) as a cofactor. The cofactor is Mn(2+).

The catalysed reaction is 2 H2O2 = O2 + 2 H2O. Its function is as follows. Catalyzes the decomposition of hydrogen peroxide into water and oxygen. The protein is Manganese catalase (ydbD) of Bacillus subtilis (strain 168).